Consider the following 110-residue polypeptide: NAD(P)H-quinone oxidoreductase subunit M (110 aa).

It belongs to the complex I NdhM subunit family. In terms of assembly, NDH-1 can be composed of about 15 different subunits; different subcomplexes with different compositions have been identified which probably have different functions.

It is found in the cellular thylakoid membrane. It catalyses the reaction a plastoquinone + NADH + (n+1) H(+)(in) = a plastoquinol + NAD(+) + n H(+)(out). The catalysed reaction is a plastoquinone + NADPH + (n+1) H(+)(in) = a plastoquinol + NADP(+) + n H(+)(out). Its function is as follows. NDH-1 shuttles electrons from an unknown electron donor, via FMN and iron-sulfur (Fe-S) centers, to quinones in the respiratory and/or the photosynthetic chain. The immediate electron acceptor for the enzyme in this species is believed to be plastoquinone. Couples the redox reaction to proton translocation, and thus conserves the redox energy in a proton gradient. Cyanobacterial NDH-1 also plays a role in inorganic carbon-concentration. This chain is NAD(P)H-quinone oxidoreductase subunit M, found in Synechococcus elongatus (strain ATCC 33912 / PCC 7942 / FACHB-805) (Anacystis nidulans R2).